A 77-amino-acid chain; its full sequence is uncharacterized protein (77 aa).

2 helical membrane-spanning segments follow: residues 3-23 (FNFI…SFLF) and 35-55 (IGAI…VALL).

The protein localises to the cell membrane. This is an uncharacterized protein from Haemophilus influenzae (strain ATCC 51907 / DSM 11121 / KW20 / Rd).